The chain runs to 196 residues: DnaA initiator-associating protein DiaA (196 aa).

An SIS domain is found at 34–196; the sequence is LVQSLLNGNK…DNTLFPHQDD (163 aa).

The protein belongs to the SIS family. DiaA subfamily. In terms of assembly, homotetramer; dimer of dimers.

Its function is as follows. Required for the timely initiation of chromosomal replication via direct interactions with the DnaA initiator protein. The polypeptide is DnaA initiator-associating protein DiaA (Cronobacter sakazakii (strain ATCC BAA-894) (Enterobacter sakazakii)).